We begin with the raw amino-acid sequence, 311 residues long: Thioredoxin reductase (311 aa).

Residues 31–39 (FEKGMPGGQ) and 32–39 (EKGMPGGQ) contribute to the FAD site. An intrachain disulfide couples C133 to C136. Residue 281-290 (DIRIFAPKQV) coordinates FAD.

Belongs to the class-II pyridine nucleotide-disulfide oxidoreductase family. As to quaternary structure, homodimer. FAD is required as a cofactor.

Its subcellular location is the cytoplasm. It catalyses the reaction [thioredoxin]-dithiol + NADP(+) = [thioredoxin]-disulfide + NADPH + H(+). The protein is Thioredoxin reductase (trxB) of Helicobacter pylori (strain J99 / ATCC 700824) (Campylobacter pylori J99).